The sequence spans 229 residues: Urease accessory protein UreF (229 aa).

The protein belongs to the UreF family. UreD, UreF and UreG form a complex that acts as a GTP-hydrolysis-dependent molecular chaperone, activating the urease apoprotein by helping to assemble the nickel containing metallocenter of UreC. The UreE protein probably delivers the nickel.

The protein localises to the cytoplasm. Functionally, required for maturation of urease via the functional incorporation of the urease nickel metallocenter. This Ralstonia pickettii (strain 12J) protein is Urease accessory protein UreF.